Here is a 1893-residue protein sequence, read N- to C-terminus: Plexin-A4 (1893 aa).

The signal sequence occupies residues 1-23 (MKAMPWNWTCLLSHLLVVGMGSS). A Sema domain is found at 24–506 (TLLPRQPPQL…SERQLTRVPV (483 aa)). Topologically, residues 24 to 1236 (TLLPRQPPQL…IAPDSPLSLP (1213 aa)) are extracellular. Disulfide bonds link Cys-94-Cys-103, Cys-129-Cys-137, Cys-283-Cys-404, Cys-299-Cys-355, Cys-373-Cys-392, Cys-509-Cys-526, Cys-515-Cys-557, Cys-518-Cys-535, Cys-529-Cys-541, and Cys-592-Cys-611. The 51-residue stretch at 508–558 (SCGQYRSCGECLGSGDPHCGWCVLHNTCTRKERCERSREPRRFASEMKQCV) folds into the PSI 1 domain. An N-linked (GlcNAc...) asparagine glycan is attached at Asn-654. PSI domains follow at residues 654–701 (NCSV…EDCP) and 802–855 (KCGA…SKCT). 4 IPT/TIG domains span residues 857–951 (PRIT…YYFM), 953–1036 (LTLA…FQYV), 1039–1138 (PTIV…FTYY), and 1141–1229 (PVFE…YIAP). Residues Asn-1006, Asn-1131, and Asn-1179 are each glycosylated (N-linked (GlcNAc...) asparagine). Residues 1237–1257 (AIVSIAVAGGLLIIFIVAVLI) traverse the membrane as a helical segment. At 1258–1893 (AYKRKSRESD…QVITLMSLDS (636 aa)) the chain is on the cytoplasmic side. Lys-1349 carries the post-translational modification N6-acetyllysine.

It belongs to the plexin family. In terms of assembly, interacts with NRP1 and NRP2. Expressed in the developing nervous system. Widely expressed in both the central and peripheral nervous systems. Expressed in the peripheral ganglia, somatosensory, olfactory, visual, auditory and equilibrium systems.

It localises to the cell membrane. Its function is as follows. Coreceptor for SEMA3A. Necessary for signaling by class 3 semaphorins and subsequent remodeling of the cytoskeleton. Plays a role in axon guidance in the developing nervous system. Class 3 semaphorins bind to a complex composed of a neuropilin and a plexin. The plexin modulates the affinity of the complex for specific semaphorins, and its cytoplasmic domain is required for the activation of down-stream signaling events in the cytoplasm. This chain is Plexin-A4 (Plxna4), found in Mus musculus (Mouse).